Consider the following 104-residue polypeptide: Putative zinc finger protein ORF104b (104 aa).

Residues 62–85 (YECKYCHTRYLSHTGIVYHLEREH) form a C2H2-type zinc finger.

This is Putative zinc finger protein ORF104b from Acidianus sp. F28 (AFV-2).